Here is a 515-residue protein sequence, read N- to C-terminus: 2,3-bisphosphoglycerate-independent phosphoglycerate mutase (515 aa).

Positions 14 and 64 each coordinate Mn(2+). Residue S64 is the Phosphoserine intermediate of the active site. Substrate-binding positions include H125, 155–156 (RD), R187, R193, 263–266 (RADR), and K337. Residues D404, H408, D445, H446, and H464 each coordinate Mn(2+).

It belongs to the BPG-independent phosphoglycerate mutase family. As to quaternary structure, monomer. Mn(2+) serves as cofactor.

The catalysed reaction is (2R)-2-phosphoglycerate = (2R)-3-phosphoglycerate. The protein operates within carbohydrate degradation; glycolysis; pyruvate from D-glyceraldehyde 3-phosphate: step 3/5. In terms of biological role, catalyzes the interconversion of 2-phosphoglycerate and 3-phosphoglycerate. This chain is 2,3-bisphosphoglycerate-independent phosphoglycerate mutase, found in Yersinia pseudotuberculosis serotype O:1b (strain IP 31758).